Reading from the N-terminus, the 214-residue chain is tRNA (guanine-N(7)-)-methyltransferase (214 aa).

The S-adenosyl-L-methionine site is built by Glu-44, Glu-69, Asp-96, and Asp-118. Asp-118 is an active-site residue. Substrate is bound by residues Lys-122, Asp-154, and 191–194 (TEYE).

It belongs to the class I-like SAM-binding methyltransferase superfamily. TrmB family.

The catalysed reaction is guanosine(46) in tRNA + S-adenosyl-L-methionine = N(7)-methylguanosine(46) in tRNA + S-adenosyl-L-homocysteine. The protein operates within tRNA modification; N(7)-methylguanine-tRNA biosynthesis. Catalyzes the formation of N(7)-methylguanine at position 46 (m7G46) in tRNA. The polypeptide is tRNA (guanine-N(7)-)-methyltransferase (Listeria monocytogenes serovar 1/2a (strain ATCC BAA-679 / EGD-e)).